Reading from the N-terminus, the 66-residue chain is DNA-directed RNA polymerase subunit Rpo10 (66 aa).

Zn(2+) is bound by residues Cys7, Cys10, Cys44, and Cys45.

Belongs to the archaeal Rpo10/eukaryotic RPB10 RNA polymerase subunit family. In terms of assembly, part of the RNA polymerase complex. Zn(2+) is required as a cofactor.

The protein resides in the cytoplasm. The catalysed reaction is RNA(n) + a ribonucleoside 5'-triphosphate = RNA(n+1) + diphosphate. Its function is as follows. DNA-dependent RNA polymerase (RNAP) catalyzes the transcription of DNA into RNA using the four ribonucleoside triphosphates as substrates. The polypeptide is DNA-directed RNA polymerase subunit Rpo10 (Saccharolobus islandicus (strain Y.N.15.51 / Yellowstone #2) (Sulfolobus islandicus)).